The primary structure comprises 150 residues: Transcriptional repressor NrdR (150 aa).

The tract at residues M1–G22 is disordered. A zinc finger lies at C3–C34. An ATP-cone domain is found at L49 to R136.

Belongs to the NrdR family. It depends on Zn(2+) as a cofactor.

In terms of biological role, negatively regulates transcription of bacterial ribonucleotide reductase nrd genes and operons by binding to NrdR-boxes. This Deinococcus geothermalis (strain DSM 11300 / CIP 105573 / AG-3a) protein is Transcriptional repressor NrdR.